Consider the following 342-residue polypeptide: Strictosidine synthase (342 aa).

A signal peptide spans K1–S20. N-linked (GlcNAc...) asparagine glycosylation occurs at N89.

Belongs to the strictosidine synthase family. In terms of assembly, monomer.

It is found in the vacuole. It catalyses the reaction 3alpha(S)-strictosidine + H2O = secologanin + tryptamine. It participates in alkaloid biosynthesis; 3alpha(S)-strictosidine biosynthesis; 3alpha(S)-strictosidine from secologanin and tryptamine: step 1/1. Functionally, catalyzes the stereospecific condensation of tryptamine with secologanin to form strictosidine, the key intermediate of indole alkaloid biosynthesis. This chain is Strictosidine synthase (STR1), found in Rauvolfia mannii.